Reading from the N-terminus, the 638-residue chain is LIM domain kinase 2 (638 aa).

2 LIM zinc-binding domains span residues 12 to 63 and 72 to 124; these read CQGC…CHKD and CHGC…CGKC. Residues 152–239 enclose the PDZ domain; that stretch reads HISMPATTEG…TLQLLIEHDP (88 aa). The tract at residues 280–304 is disordered; sequence RRRSLRRSNSISKSPGPSSPKEPLL. Positions 286-304 are enriched in low complexity; that stretch reads RSNSISKSPGPSSPKEPLL. 2 positions are modified to phosphoserine: serine 293 and serine 298. The 278-residue stretch at 331-608 folds into the Protein kinase domain; it reads LIHGEVLGKG…DFFEALSLYL (278 aa). Residues 337-345 and asparagine 360 contribute to the ATP site; that span reads LGKGFFGQA. Residue aspartate 451 is part of the active site. Threonine 505 is subject to Phosphothreonine; by ROCK1 and CDC42BP.

The protein belongs to the protein kinase superfamily. TKL Ser/Thr protein kinase family. Binds ROCK1 and MARF1. Interacts with NISCH. Post-translationally, phosphorylated on serine and/or threonine residues by ROCK1.

The protein resides in the cytoplasm. The protein localises to the cytoskeleton. Its subcellular location is the spindle. It localises to the microtubule organizing center. It is found in the centrosome. The enzyme catalyses L-seryl-[protein] + ATP = O-phospho-L-seryl-[protein] + ADP + H(+). The catalysed reaction is L-threonyl-[protein] + ATP = O-phospho-L-threonyl-[protein] + ADP + H(+). Serine/threonine-protein kinase that plays an essential role in the regulation of actin filament dynamics. Acts downstream of several Rho family GTPase signal transduction pathways. Involved in astral microtubule organization and mitotic spindle orientation during early stages of mitosis by mediating phosphorylation of TPPP. Displays serine/threonine-specific phosphorylation of myelin basic protein and histone (MBP) in vitro. Suppresses ciliogenesis via multiple pathways; phosphorylation of CFL1, suppression of directional trafficking of ciliary vesicles to the ciliary base, and by facilitating YAP1 nuclear localization where it acts as a transcriptional corepressor of the TEAD4 target genes AURKA and PLK1. This is LIM domain kinase 2 (LIMK2) from Bos taurus (Bovine).